We begin with the raw amino-acid sequence, 129 residues long: NADH-quinone oxidoreductase subunit A (129 aa).

3 helical membrane passes run 14 to 34, 67 to 87, and 95 to 115; these read LAIH…VAAL, FLIA…FAWA, and WFGL…LVYL.

This sequence belongs to the complex I subunit 3 family. As to quaternary structure, NDH-1 is composed of 14 different subunits. Subunits NuoA, H, J, K, L, M, N constitute the membrane sector of the complex.

It localises to the cell inner membrane. The catalysed reaction is a quinone + NADH + 5 H(+)(in) = a quinol + NAD(+) + 4 H(+)(out). NDH-1 shuttles electrons from NADH, via FMN and iron-sulfur (Fe-S) centers, to quinones in the respiratory chain. The immediate electron acceptor for the enzyme in this species is believed to be ubiquinone. Couples the redox reaction to proton translocation (for every two electrons transferred, four hydrogen ions are translocated across the cytoplasmic membrane), and thus conserves the redox energy in a proton gradient. In Rhodopseudomonas palustris (strain HaA2), this protein is NADH-quinone oxidoreductase subunit A.